Consider the following 227-residue polypeptide: Esterase OVCA2 (227 aa).

The interval 44–68 (GPHPVPDPPGPEGARSDFGSCPPEE) is disordered. Active-site charge relay system residues include S119, D179, and H206.

This sequence belongs to the LovG family. In terms of processing, proteolytically degraded in response to RA and 4HPR treatment in a time- and dose-dependent manner in the promyelocytic leukemia cell line HL-60. Ubiquitously expressed.

The catalysed reaction is a carboxylic ester + H2O = an alcohol + a carboxylate + H(+). Its function is as follows. Exhibits ester hydrolase activity with a strong preference for long-chain alkyl ester substrates and high selectivity against a variety of short, branched, and substituted esters. Is able to hydrolyze ester bonds within a wide range of p-nitrophenyl derivatives (C2-C14) in vitro, with a strong preference toward substrates of &gt;8 carbons. This Homo sapiens (Human) protein is Esterase OVCA2.